The sequence spans 107 residues: Replication initiation control protein YabA (107 aa).

The Zn(2+) site is built by histidine 81, cysteine 83, cysteine 97, and cysteine 100.

It belongs to the YabA family. As to quaternary structure, homotetramer. Interacts with both DnaA and DnaN, acting as a bridge between these two proteins. It depends on Zn(2+) as a cofactor.

The protein localises to the cytoplasm. Its subcellular location is the nucleoid. Involved in control of chromosome replication initiation. Inhibits the cooperative binding of DnaA to the oriC region, thus negatively regulating initiation of chromosome replication. Inhibits the ability of DnaA-ATP to form a helix on DNA; does not disassemble preformed DnaA-DNA helices. Decreases the residence time of DnaA on the chromosome at its binding sites (oriC, replication forks and promoter-binding sites). Tethers DnaA to the replication machinery via the DNA polymerase beta sliding clamp subunit (dnaN). Associates with oriC and other DnaA targets on the chromosome in a DnaA-dependent manner. This is Replication initiation control protein YabA from Streptococcus equi subsp. zooepidemicus (strain MGCS10565).